The sequence spans 128 residues: Small ribosomal subunit protein uS9c (128 aa).

Belongs to the universal ribosomal protein uS9 family.

The protein resides in the plastid. The protein is Small ribosomal subunit protein uS9c (rps9) of Euglena longa (Euglenophycean alga).